A 142-amino-acid polypeptide reads, in one-letter code: Large ribosomal subunit protein uL11 (142 aa).

This sequence belongs to the universal ribosomal protein uL11 family. In terms of assembly, part of the ribosomal stalk of the 50S ribosomal subunit. Interacts with L10 and the large rRNA to form the base of the stalk. L10 forms an elongated spine to which L12 dimers bind in a sequential fashion forming a multimeric L10(L12)X complex. In terms of processing, one or more lysine residues are methylated.

In terms of biological role, forms part of the ribosomal stalk which helps the ribosome interact with GTP-bound translation factors. The protein is Large ribosomal subunit protein uL11 of Shewanella loihica (strain ATCC BAA-1088 / PV-4).